An 890-amino-acid chain; its full sequence is DNA mismatch repair protein MutS (890 aa).

ATP is bound at residue 607 to 614 (GPNMSGKS).

The protein belongs to the DNA mismatch repair MutS family.

This protein is involved in the repair of mismatches in DNA. It is possible that it carries out the mismatch recognition step. This protein has a weak ATPase activity. The sequence is that of DNA mismatch repair protein MutS from Bacillus thuringiensis subsp. konkukian (strain 97-27).